We begin with the raw amino-acid sequence, 475 residues long: Solute carrier family 46 member 2 (475 aa).

The Cytoplasmic portion of the chain corresponds to 1–23 (MSPEVTCPRRGHLPRFHPRTWVE). A helical transmembrane segment spans residues 24 to 44 (PVVASSQVAASLYDAGLLLVV). At 45–78 (KASYGTGGSSNHSASPSPRGALEDQQQRAISNFY) the chain is on the extracellular side. Asparagine 55 carries N-linked (GlcNAc...) asparagine glycosylation. A helical transmembrane segment spans residues 79 to 99 (IIYNLVVGLSPLLSAYGLGWL). Topologically, residues 100–108 (SDRYHRKIS) are cytoplasmic. A helical membrane pass occupies residues 109–129 (ICMSLLGFLLSRLGLLLKVLL). Residues 130–138 (DWPVEVLYG) are Extracellular-facing. A helical transmembrane segment spans residues 139 to 159 (AAALNGLFGGFSAFWSGVMAL). Over 160–172 (GSLGSSEGRRSVR) the chain is Cytoplasmic. Residues 173–193 (LILIDLMLGLAGFCGSMASGH) traverse the membrane as a helical segment. Topologically, residues 194–205 (LFKQMAGHSGQG) are extracellular. Residues 206–226 (LILTACSVSCASFALLYSLLV) traverse the membrane as a helical segment. Over 227-282 (LKVPESVAKPSQELPAVDTVSGTVGTYRTLDPDQLDQQYAVGHPPSPGKAKPHKTT) the chain is Cytoplasmic. The chain crosses the membrane as a helical span at residues 283-303 (IALLFVGAIIYDLAVVGTVDV). The Extracellular segment spans residues 304–320 (IPLFVLREPLGWNQVQV). The helical transmembrane segment at 321–341 (GYGMAAGYTIFITSFLGVLVF) threads the bilayer. Over 342–347 (SRCFRD) the chain is Cytoplasmic. A helical transmembrane segment spans residues 348 to 368 (TTMIMIGMVSFGSGALLLAFV). The Extracellular portion of the chain corresponds to 369 to 370 (KE). The helical transmembrane segment at 371-391 (TYMFYIARAVMLFALIPVTTI) threads the bilayer. Topologically, residues 392–406 (RSAMSKLIKGSSYGK) are cytoplasmic. Residues 407-427 (VFVILQLSLALTGVVTSTLYN) traverse the membrane as a helical segment. Residues 428–435 (KIYQLTMD) are Extracellular-facing. A helical membrane pass occupies residues 436–456 (MFVGSCFALSSFLSFLAIIPI). At 457–475 (SIVAYKQVPLSPYGDIIEK) the chain is on the cytoplasmic side.

The protein belongs to the major facilitator superfamily. SLC46A family. Post-translationally, glycosylated. Strongly expressed in the adult thymus. Expressed in spleen, lymph nodes, thymus, PBL, bone marrow and fetal liver. Expressed in monocytes and pre-dendridic cells.

The protein resides in the endosome membrane. Its subcellular location is the cell membrane. The enzyme catalyses N-acetyl-beta-D-glucosaminyl-(1-&gt;4)-1,6-anhydro-N-acetyl-beta-D-muramoyl-L-alanyl-gamma-D-glutamyl-meso-2,6-diaminopimeloyl-D-alanine(out) + n H(+)(out) = N-acetyl-beta-D-glucosaminyl-(1-&gt;4)-1,6-anhydro-N-acetyl-beta-D-muramoyl-L-alanyl-gamma-D-glutamyl-meso-2,6-diaminopimeloyl-D-alanine(in) + n H(+)(in). It catalyses the reaction L-alanyl-gamma-D-glutamyl-meso-2,6-diaminopimelate(out) + n H(+)(out) = L-alanyl-gamma-D-glutamyl-meso-2,6-diaminopimelate(in) + n H(+)(in). The catalysed reaction is N-acetyl-D-muramoyl-L-alanyl-D-isoglutamine(out) + n H(+)(out) = N-acetyl-D-muramoyl-L-alanyl-D-isoglutamine(in) + n H(+)(in). It carries out the reaction 2',3'-cGAMP(out) + n H(+)(out) = 2',3'-cGAMP(in) + n H(+)(in). The enzyme catalyses 3',3'-cGAMP(out) + n H(+)(out) = 3',3'-cGAMP(in) + n H(+)(in). Functionally, proton-coupled transporter that delivers pathogen-associated or danger-associated molecular patterns to cytosolic pattern recognition receptors as part of the innate immune response to microbes or tissue injury. Has selectivity toward muropeptides that contain the amino acid diaminopimelic acid (DAP-type peptidoglycan muropeptides) including Tri-DAP and tracheal toxin (TCT), common in Gram-negative bacteria and Gram-positive bacilli. In the context of immune recognition of skin microbiota, shuttles bacterial muropeptides across the endolysosomal membranes into the cytosol for recognition by NOD1, triggering MYD88-dependent secretion of IL1A and neutrophil recruitment in a pyroptosis-type inflammatory process. To a lesser extent and redundantly, transports muramyl dipeptides derived from most bacterial proteoglycans, eliciting NOD2 receptor activation and downstream inflammatory responses. Postulated to function as a dominant importer of cyclic GMP-AMP dinucleotides (cGAMPs) in monocyte and macrophage cell lineages. Selectively imports cGAMPs derived from pathogenic bacteria such as 3'3'-cGAMP thus providing for differential immune recognition of pathogenic versus commensal bacteria. During tumorigenesis may transport extracellular tumor-derived 2'3'-cGAMP across the plasma membrane of M1-polarized macrophages to activate the anti-tumoral stimulator of interferon genes (STING) pathway. The transport mechanism, its electrogenicity and stoichiometry remain to be elucidated. The protein is Solute carrier family 46 member 2 of Homo sapiens (Human).